Here is a 349-residue protein sequence, read N- to C-terminus: Peroxidase 22 (349 aa).

The signal sequence occupies residues 1 to 29 (MGFSPSFSCSAIGALILGCLLLQASNSNA). Pyrrolidone carboxylic acid is present on glutamine 30. 4 disulfide bridges follow: cysteine 40–cysteine 120, cysteine 73–cysteine 78, cysteine 126–cysteine 329, and cysteine 206–cysteine 238. Histidine 71 functions as the Proton acceptor in the catalytic mechanism. Aspartate 72, valine 75, glycine 77, aspartate 79, and serine 81 together coordinate Ca(2+). N-linked (GlcNAc...) asparagine glycosylation occurs at asparagine 86. Proline 168 contacts substrate. N-linked (GlcNAc...) asparagine glycosylation is found at asparagine 173 and asparagine 187. Position 199 (histidine 199) interacts with heme b. Position 200 (threonine 200) interacts with Ca(2+). Asparagine 217 and asparagine 243 each carry an N-linked (GlcNAc...) asparagine glycan. Residues aspartate 251, threonine 254, and aspartate 259 each coordinate Ca(2+).

It belongs to the peroxidase family. Classical plant (class III) peroxidase subfamily. Heme b serves as cofactor. The cofactor is Ca(2+). As to expression, mainly expressed in roots.

The protein resides in the secreted. It is found in the vacuole. The enzyme catalyses 2 a phenolic donor + H2O2 = 2 a phenolic radical donor + 2 H2O. Its function is as follows. Removal of H(2)O(2), oxidation of toxic reductants, biosynthesis and degradation of lignin, suberization, auxin catabolism, response to environmental stresses such as wounding, pathogen attack and oxidative stress. These functions might be dependent on each isozyme/isoform in each plant tissue. The sequence is that of Peroxidase 22 (PER22) from Arabidopsis thaliana (Mouse-ear cress).